Reading from the N-terminus, the 1000-residue chain is C2 domain-containing protein 5 (1000 aa).

Residues 1 to 109 enclose the C2 domain; it reads MPGKLKVKIV…EAATVISGWF (109 aa). Ca(2+)-binding residues include D19, D26, D76, D78, S81, and D84. Position 197 is a phosphoserine; by PKB/AKT2 (S197). S200 and S260 each carry phosphoserine. Positions 265 to 330 are disordered; that stretch reads MKEIPFNEDP…SGSAGKEGGP (66 aa). Polar residues predominate over residues 274-289; sequence PNPNTHSSGPSTPLKN. Low complexity predominate over residues 290–318; sequence QTYSFSPSKSYSRQSSSSDTDLSLTPKTG. Phosphoserine occurs at positions 293, 295, 304, 305, and 306. T317 is subject to Phosphothreonine. Gly residues predominate over residues 319–328; it reads MGSGSAGKEG. S323 carries the post-translational modification Phosphoserine. The residue at position 601 (T601) is a Phosphothreonine. The tract at residues 639–669 is disordered; the sequence is EIIGSPIPEPRQRSRLLRSQSESSDEVTELD. Phosphoserine is present on residues S643, S657, S659, S661, and S662. T666 is subject to Phosphothreonine. A Phosphoserine modification is found at S671. T807 is modified (phosphothreonine). S817 and S852 each carry phosphoserine.

Requires Ca(2+) as cofactor. Phosphorylated on Ser-197 by active myristoylated kinase AKT2; insulin-stimulated phosphorylation by AKT2 regulates SLC2A4/GLUT4 translocation into the plasma membrane.

Its subcellular location is the cytoplasmic vesicle membrane. It is found in the cytoplasm. It localises to the cell cortex. The protein resides in the cell membrane. The protein localises to the cell projection. Its subcellular location is the ruffle. Its function is as follows. Required for insulin-stimulated glucose transport and glucose transporter SLC2A4/GLUT4 translocation from intracellular glucose storage vesicle (GSV) to the plasma membrane (PM) in adipocytes. Binds phospholipid membranes in a calcium-dependent manner and is necessary for the optimal membrane fusion between SLC2A4/GLUT4 GSV and the PM. The sequence is that of C2 domain-containing protein 5 (C2CD5) from Homo sapiens (Human).